The sequence spans 129 residues: UPF0212 protein Mbar_A2902 (129 aa).

It belongs to the UPF0212 family.

The sequence is that of UPF0212 protein Mbar_A2902 from Methanosarcina barkeri (strain Fusaro / DSM 804).